The following is a 1317-amino-acid chain: Immunoglobulin superfamily member 1 (1317 aa).

The N-terminal stretch at 1–20 (MMLRTFTLLLLCIWLNPGMT) is a signal peptide. 5 Ig-like C2-type domains span residues 21–112 (SLAV…KILE), 114–211 (EAPG…KLVV), 216–302 (PKPT…SDIL), 311–398 (PKTW…ATYN), and 400–481 (VELM…HRSK). Topologically, residues 21 to 499 (SLAVESQPEL…GFLTWNSILN (479 aa)) are extracellular. Asn-43 carries N-linked (GlcNAc...) asparagine glycosylation. The cysteines at positions 48 and 96 are disulfide-linked. A disulfide bridge links Cys-238 with Cys-286. N-linked (GlcNAc...) asparagine glycans are attached at residues Asn-328 and Asn-371. 2 disulfides stabilise this stretch: Cys-333–Cys-382 and Cys-422–Cys-465. A helical transmembrane segment spans residues 500–520 (EAVRVSLTMQLASLLLLVVWI). The Cytoplasmic segment spans residues 521 to 531 (RWKCRRLRLRE). Residues 532–552 (AWLLGTAQGVAMLFILMALLC) traverse the membrane as a helical segment. The Extracellular portion of the chain corresponds to 553 to 1317 (CGLCNGALTE…EVSVELTVPI (765 aa)). 7 consecutive Ig-like C2-type domains span residues 570 to 658 (TPKP…ALEL), 659 to 753 (VGTD…ELVI), 758 to 850 (PKPF…LVVT), 854 to 938 (PKPT…SSLS), 946 to 1041 (TDTF…ELIV), 1046 to 1131 (PKPS…NHSN), and 1142 to 1223 (PKPS…EPSD). Cys-780 and Cys-830 are disulfide-bonded. The N-linked (GlcNAc...) asparagine glycan is linked to Asn-871. Residues Cys-876 and Cys-923 are joined by a disulfide bond. N-linked (GlcNAc...) asparagine glycosylation is found at Asn-967 and Asn-1063. 2 cysteine pairs are disulfide-bonded: Cys-1068-Cys-1115 and Cys-1164-Cys-1207. A disordered region spans residues 1290–1310 (NQEGEPGTTTNSPSSASQEVS). The segment covering 1296–1309 (GTTTNSPSSASQEV) has biased composition (polar residues).

In terms of assembly, interacts with INHA; the interaction is not confirmed by standard receptor binding assays. Interacts with ACVR1B; the interaction appears to be ligand-dependent as it is diminished by inhibin B and activin A. Interacts with ACVR2A, ACVR2B, ACVRL1 and BMPR1B. Interacts with HECTD1.

The protein localises to the membrane. The protein resides in the secreted. Its function is as follows. Seems to be a coreceptor in inhibin signaling, but seems not to be a high-affinity inhibin receptor. Antagonizes activin A signaling in the presence or absence of inhibin B. Necessary to mediate a specific antagonistic effect of inhibin B on activin-stimulated transcription. The chain is Immunoglobulin superfamily member 1 (Igsf1) from Mus musculus (Mouse).